We begin with the raw amino-acid sequence, 442 residues long: Sexual development regulator VELC (442 aa).

2 disordered regions span residues 1–192 (MPVH…ASLA) and 396–442 (KKGN…IRRS). Residues 45 to 54 (IAPPPPPTPP) show a composition bias toward pro residues. The span at 79–97 (PGPRRPSNPSSPQHPQQPG) shows a compositional bias: low complexity. Residues 213 to 396 (FSTSEYHLHV…KEQGCLISIK (184 aa)) enclose the Velvet domain. The span at 401–411 (KGGGGGGGGPS) shows a compositional bias: gly residues. Positions 433 to 442 (AGKRKRIRRS) are enriched in basic residues.

It belongs to the velvet family. VelC subfamily.

It is found in the nucleus. In terms of biological role, velvet-domain-containing protein that acts as a positive regulator of sexual development. Plays an important role in pathogenicity through regulating positively appressorium-mediated penetration and invasive growth. The chain is Sexual development regulator VELC from Pyricularia oryzae (strain 70-15 / ATCC MYA-4617 / FGSC 8958) (Rice blast fungus).